Here is a 129-residue protein sequence, read N- to C-terminus: M-zodatoxin-Lt8k (129 aa).

The signal sequence occupies residues Met1 to Ser20. The propeptide occupies Lys21 to Arg60.

This sequence belongs to the cationic peptide 06 (cytoinsectotoxin) family. As to expression, expressed by the venom gland.

The protein localises to the secreted. Functionally, insecticidal, cytolytic and antimicrobial peptide. Forms voltage-dependent, ion-permeable channels in membranes. At high concentration causes cell membrane lysis. The chain is M-zodatoxin-Lt8k (cit 1-10) from Lachesana tarabaevi (Spider).